Reading from the N-terminus, the 61-residue chain is Small ribosomal subunit protein uS14B (61 aa).

The Zn(2+) site is built by C24, C27, C40, and C43.

It belongs to the universal ribosomal protein uS14 family. Zinc-binding uS14 subfamily. In terms of assembly, part of the 30S ribosomal subunit. Contacts proteins S3 and S10. It depends on Zn(2+) as a cofactor.

In terms of biological role, binds 16S rRNA, required for the assembly of 30S particles and may also be responsible for determining the conformation of the 16S rRNA at the A site. The polypeptide is Small ribosomal subunit protein uS14B (Mycolicibacterium gilvum (strain PYR-GCK) (Mycobacterium gilvum (strain PYR-GCK))).